The primary structure comprises 346 residues: MALKHMQIFLFVAIFSSFCFSITLSRPLDNELIMQKRHIEWMTKHGRVYADVKEENNRYVVFKNNVERIEHLNSIPAGRTFKLAVNQFADLTNDEFRSMYTGFKGVSALSSQSQTKMSPFRYQNVSSGALPVSVDWRKKGAVTPIKNQGSCGCCWAFSAVAAIEGATQIKKGKLISLSEQQLVDCDTNDFGCEGGLMDTAFEHIKATGGLTTESNYPYKGEDATCNSKKTNPKATSITGYEDVPVNDEQALMKAVAHQPVSVGIEGGGFDFQFYSSGVFTGECTTYLDHAVTAIGYGESTNGSKYWIIKNSWGTKWGESGYMRIQKDVKDKQGLCGLAMKASYPTI.

A signal peptide spans 1 to 25; it reads MALKHMQIFLFVAIFSSFCFSITLS. A glycan (N-linked (GlcNAc...) asparagine) is linked at N124. 3 disulfide bridges follow: C151-C192, C185-C225, and C283-C335. C154 is an active-site residue. The active site involves H289. The N-linked (GlcNAc...) asparagine glycan is linked to N301. Residue N310 is part of the active site.

It belongs to the peptidase C1 family. Found in senescent leaves, especially in senescence-associated vacuoles- (SAVs) containing cells (e.g. mesophyll and guard cells), and in senescencing ovules of unfertilised pistils.

Its subcellular location is the vacuole. Cysteine protease that may have a developmental senescence specific cell death function during apoptosis, heavy metal detoxification, and hypersensitive response. This is Senescence-specific cysteine protease SAG12 from Arabidopsis thaliana (Mouse-ear cress).